Reading from the N-terminus, the 809-residue chain is Cell division control protein 48 homolog A (809 aa).

Residue S2 is modified to N-acetylserine. S41 is subject to Phosphoserine. ADP contacts are provided by residues G210, 248–256 (GPPGSGKTL), and H387. Residue 521–529 (GPPGCGKTL) participates in ATP binding. The tract at residues 782-809 (AGSGATTGVADPFATSAAAAGDDDDLYN) is disordered. The span at 791–801 (ADPFATSAAAA) shows a compositional bias: low complexity.

It belongs to the AAA ATPase family. In terms of assembly, homohexamer. Interacts with SERK1, GRF6, KAPP and SYP31, but not with KNOLLE. Component of the SERK1 signaling complex, composed of KAPP, CDC48A, GRF6 or GRF7, SERK1, SERK2, SERK3/BAK1 and BRI1. Interacts with PUX1, PUX2, PUX3, PUX4, PUX5, PUX7 and PUX11 via its N-terminus. Phosphorylated on at least one threonine residue and on Ser-41 by SERK1.

It localises to the nucleus. The protein localises to the cytoplasm. The protein resides in the cytoskeleton. Its subcellular location is the phragmoplast. It is found in the cell membrane. In terms of biological role, probably functions in cell division and growth processes. Interacts with certain SNAREs as part of specialized membrane fusion events where vesicles from the same organelle fuse (homotypic fusion). This chain is Cell division control protein 48 homolog A (CDC48A), found in Arabidopsis thaliana (Mouse-ear cress).